Reading from the N-terminus, the 448-residue chain is uncharacterized protein (448 aa).

Residues 187-198 (SKGDRGDADDRG) are compositionally biased toward basic and acidic residues. Disordered stretches follow at residues 187–221 (SKGD…LPTR), 243–270 (LQVP…GATM), and 291–361 (LSGL…LPNG). Over residues 243–261 (LQVPGGTSAAIPSASSTPS) the composition is skewed to low complexity. Basic and acidic residues predominate over residues 307 to 334 (FDERGQEVRDPADYEHSNEPDERRADDR).

It to M.tuberculosis Rv0025 and Rv0739.

This is an uncharacterized protein from Mycobacterium tuberculosis (strain ATCC 25618 / H37Rv).